A 423-amino-acid chain; its full sequence is Diaminobutyrate--2-oxoglutarate transaminase (423 aa).

Lys-271 is subject to N6-(pyridoxal phosphate)lysine.

The protein belongs to the class-III pyridoxal-phosphate-dependent aminotransferase family. Requires pyridoxal 5'-phosphate as cofactor.

The catalysed reaction is L-2,4-diaminobutanoate + 2-oxoglutarate = L-aspartate 4-semialdehyde + L-glutamate. It functions in the pathway amine and polyamine biosynthesis; ectoine biosynthesis; L-ectoine from L-aspartate 4-semialdehyde: step 1/3. In terms of biological role, catalyzes reversively the conversion of L-aspartate beta-semialdehyde (ASA) to L-2,4-diaminobutyrate (DABA) by transamination with L-glutamate. This Streptomyces coelicolor (strain ATCC BAA-471 / A3(2) / M145) protein is Diaminobutyrate--2-oxoglutarate transaminase (ectB).